Here is a 37-residue protein sequence, read N- to C-terminus: Large ribosomal subunit protein bL36 (37 aa).

Belongs to the bacterial ribosomal protein bL36 family.

In Brevibacillus brevis (strain 47 / JCM 6285 / NBRC 100599), this protein is Large ribosomal subunit protein bL36.